A 73-amino-acid polypeptide reads, in one-letter code: uncharacterized protein (73 aa).

A coiled-coil region spans residues 20–49 (NATYNKNLELEKRLAKIRNEIPNKSKLIAT).

This is an uncharacterized protein from Acheta domesticus (House cricket).